The following is a 241-amino-acid chain: Tetraspanin-1 (241 aa).

Topologically, residues 1-11 (MGCFNFIKVMM) are cytoplasmic. A helical membrane pass occupies residues 12-32 (ILFNMLIFLCGAALLAVGIWV). Topologically, residues 33–52 (SVDGPSFVKIFGPMSSSAMQ) are extracellular. Residues 53–73 (FVNVGYFLIAAGAVLFALGFL) form a helical membrane-spanning segment. Over 74–88 (GCYGAQTESKCALMT) the chain is Cytoplasmic. A helical transmembrane segment spans residues 89–109 (FFFILLLIFIAEVAAAVVALV). Topologically, residues 110–211 (YTTLAENFLT…KQLLYDIRTN (102 aa)) are extracellular. Asn141, Asn154, Asn167, Asn180, Asn189, and Asn194 each carry an N-linked (GlcNAc...) asparagine glycan. A helical transmembrane segment spans residues 212–232 (AVTVGGVAAGIGGLELAAMIV). Residues 233-241 (SMYLYCNLE) are Cytoplasmic-facing.

It belongs to the tetraspanin (TM4SF) family. In terms of assembly, interacts with SLC19A2. Interacts with NTRK1/TRKA.

The protein localises to the lysosome membrane. Functionally, structural component of specialized membrane microdomains known as tetraspanin-enriched microdomains (TERMs), which act as platforms for receptor clustering and signaling. Participates thereby in diverse biological functions such as cell signal transduction, adhesion, migration and protein trafficking. Regulates neuronal differentiation in response to NGF by facilitating NGF-mediated activation of NTRK1/TRKA receptor tyrosine kinase and subsequent downstream signaling pathways. Plays a role in the inhibition of TNFalpha-induced apoptosis. Mechanistically, inhibits the NF-kappa-B signaling pathway by blocking phosphorylation of CHUK. Also promotes the stability of the thiamine transporter 1/SLC19A2 in intestinal epithelial cells leading to an increase of thiamine uptake process. This chain is Tetraspanin-1 (TSPAN1), found in Bos taurus (Bovine).